The primary structure comprises 624 residues: Phosphatidylserine decarboxylase proenzyme 2 (624 aa).

The interval 1 to 30 (MGHSPSRHNACGGGGGDGESPPSPLPSRFE) is disordered. Residues 16-129 (GDGESPPSPL…KDLDEHSEVL (114 aa)) form the C2 domain. 2 EF-hand domains span residues 156-191 (TEQSFARRVLAIVDYNEDGELSLSEFSDLMKAFGNK) and 192-227 (LAVAKIEELFRQADKNGDGIVDMDELAALLANQQEK). Ca(2+)-binding residues include aspartate 169, asparagine 171, aspartate 173, glutamate 175, glutamate 180, aspartate 205, asparagine 207, aspartate 209, and glutamate 216. Residues aspartate 425, histidine 481, and serine 569 each act as charge relay system; for autoendoproteolytic cleavage activity in the active site. Serine 569 acts as the Schiff-base intermediate with substrate; via pyruvic acid; for decarboxylase activity in catalysis. Serine 569 bears the Pyruvic acid (Ser); by autocatalysis mark.

The protein belongs to the phosphatidylserine decarboxylase family. PSD-B subfamily. Eukaryotic type II sub-subfamily. Heterodimer of a large membrane-associated beta subunit and a small pyruvoyl-containing alpha subunit. Pyruvate is required as a cofactor. Post-translationally, is synthesized initially as an inactive proenzyme. Formation of the active enzyme involves a self-maturation process in which the active site pyruvoyl group is generated from an internal serine residue via an autocatalytic post-translational modification. Two non-identical subunits are generated from the proenzyme in this reaction, and the pyruvate is formed at the N-terminus of the alpha chain, which is derived from the carboxyl end of the proenzyme. The autoendoproteolytic cleavage occurs by a canonical serine protease mechanism, in which the side chain hydroxyl group of the serine supplies its oxygen atom to form the C-terminus of the beta chain, while the remainder of the serine residue undergoes an oxidative deamination to produce ammonia and the pyruvoyl prosthetic group on the alpha chain. During this reaction, the Ser that is part of the protease active site of the proenzyme becomes the pyruvoyl prosthetic group, which constitutes an essential element of the active site of the mature decarboxylase.

It is found in the vacuole membrane. The protein resides in the endoplasmic reticulum membrane. It catalyses the reaction a 1,2-diacyl-sn-glycero-3-phospho-L-serine + H(+) = a 1,2-diacyl-sn-glycero-3-phosphoethanolamine + CO2. It functions in the pathway phospholipid metabolism; phosphatidylethanolamine biosynthesis; phosphatidylethanolamine from CDP-diacylglycerol: step 2/2. Functionally, catalyzes the formation of phosphatidylethanolamine (PtdEtn) from phosphatidylserine (PtdSer). Plays a central role in phospholipid metabolism and in the interorganelle trafficking of phosphatidylserine. In Oryza sativa subsp. japonica (Rice), this protein is Phosphatidylserine decarboxylase proenzyme 2.